The following is an 87-amino-acid chain: Small ribosomal subunit protein uS15 (87 aa).

The protein belongs to the universal ribosomal protein uS15 family. In terms of assembly, part of the 30S ribosomal subunit. Forms a bridge to the 50S subunit in the 70S ribosome, contacting the 23S rRNA.

Functionally, one of the primary rRNA binding proteins, it binds directly to 16S rRNA where it helps nucleate assembly of the platform of the 30S subunit by binding and bridging several RNA helices of the 16S rRNA. Its function is as follows. Forms an intersubunit bridge (bridge B4) with the 23S rRNA of the 50S subunit in the ribosome. In Clostridium perfringens (strain ATCC 13124 / DSM 756 / JCM 1290 / NCIMB 6125 / NCTC 8237 / Type A), this protein is Small ribosomal subunit protein uS15.